Consider the following 898-residue polypeptide: Protein kintoun (898 aa).

Disordered stretches follow at residues 558–680 (GELK…VESD) and 765–822 (ILGQ…SGIS). Residues 575-602 (INTRTVEDDTKVAKENVKKVDQETAHEG) are compositionally biased toward basic and acidic residues. Basic residues predominate over residues 603–616 (KKSKKNQRRKNKKR). The segment covering 641–656 (NEANSFEGTGSSSEAT) has biased composition (polar residues).

Belongs to the PIH1 family. Kintoun subfamily.

Its subcellular location is the cytoplasm. In terms of biological role, required for cytoplasmic pre-assembly of axonemal dyneins, thereby playing a central role in motility in cilia and flagella. Involved in pre-assembly of dynein arm complexes in the cytoplasm before intraflagellar transport loads them for the ciliary compartment. This is Protein kintoun from Aedes aegypti (Yellowfever mosquito).